The sequence spans 312 residues: Homoserine kinase (312 aa).

Residue 94–104 (PLGRGLGSSAA) participates in ATP binding.

Belongs to the GHMP kinase family. Homoserine kinase subfamily.

It is found in the cytoplasm. The enzyme catalyses L-homoserine + ATP = O-phospho-L-homoserine + ADP + H(+). Its pathway is amino-acid biosynthesis; L-threonine biosynthesis; L-threonine from L-aspartate: step 4/5. Catalyzes the ATP-dependent phosphorylation of L-homoserine to L-homoserine phosphate. This Caldanaerobacter subterraneus subsp. tengcongensis (strain DSM 15242 / JCM 11007 / NBRC 100824 / MB4) (Thermoanaerobacter tengcongensis) protein is Homoserine kinase.